The chain runs to 308 residues: MTKTLVFGHKNPDTDTICSAISYAELKKAQGADIEAVRLGELNSETAFVLDYFQVTAPRLVETVANEVSEVALVDHNERQQSVDDIDDVTVVAVVDHHRIANFETSDPLYYRAEPVGCTTTILLKMFRENEVEVSKTVAGLMLSAIISDTLLFQSPTCTEEDKVAAEKLALIADVDIQAYGMEMLKAGADVSKKTVAELLLDAKEFNMNGSKVEIAQINVVDVNDVLSRRAEVEALMTQNIVDKGLDLYLFVITNILTNDSVGIAIGSKTAVVEEAYGVKFVENQAPLKGVVSRKKQVVPILTDTFAK.

Mn(2+) contacts are provided by His-9, Asp-13, Asp-15, Asp-75, His-97, and Asp-149.

The protein belongs to the PPase class C family. It depends on Mn(2+) as a cofactor.

The protein localises to the cytoplasm. It carries out the reaction diphosphate + H2O = 2 phosphate + H(+). In Listeria innocua serovar 6a (strain ATCC BAA-680 / CLIP 11262), this protein is Probable manganese-dependent inorganic pyrophosphatase.